The sequence spans 724 residues: Phosphoribosylformylglycinamidine synthase subunit PurL (724 aa).

Residue His-34 is part of the active site. ATP is bound by residues Tyr-37 and Lys-75. Glu-77 contributes to the Mg(2+) binding site. Substrate contacts are provided by residues 78-81 (SHNH) and Arg-100. His-79 serves as the catalytic Proton acceptor. Asp-101 is a Mg(2+) binding site. Gln-221 is a substrate binding site. Mg(2+) is bound at residue Asp-249. 292–294 (ESQ) provides a ligand contact to substrate. Residues Asp-478 and Gly-515 each coordinate ATP. Ser-518 contacts substrate.

This sequence belongs to the FGAMS family. In terms of assembly, monomer. Part of the FGAM synthase complex composed of 1 PurL, 1 PurQ and 2 PurS subunits.

Its subcellular location is the cytoplasm. The catalysed reaction is N(2)-formyl-N(1)-(5-phospho-beta-D-ribosyl)glycinamide + L-glutamine + ATP + H2O = 2-formamido-N(1)-(5-O-phospho-beta-D-ribosyl)acetamidine + L-glutamate + ADP + phosphate + H(+). The protein operates within purine metabolism; IMP biosynthesis via de novo pathway; 5-amino-1-(5-phospho-D-ribosyl)imidazole from N(2)-formyl-N(1)-(5-phospho-D-ribosyl)glycinamide: step 1/2. Functionally, part of the phosphoribosylformylglycinamidine synthase complex involved in the purines biosynthetic pathway. Catalyzes the ATP-dependent conversion of formylglycinamide ribonucleotide (FGAR) and glutamine to yield formylglycinamidine ribonucleotide (FGAM) and glutamate. The FGAM synthase complex is composed of three subunits. PurQ produces an ammonia molecule by converting glutamine to glutamate. PurL transfers the ammonia molecule to FGAR to form FGAM in an ATP-dependent manner. PurS interacts with PurQ and PurL and is thought to assist in the transfer of the ammonia molecule from PurQ to PurL. The polypeptide is Phosphoribosylformylglycinamidine synthase subunit PurL (Caldivirga maquilingensis (strain ATCC 700844 / DSM 13496 / JCM 10307 / IC-167)).